We begin with the raw amino-acid sequence, 426 residues long: DUF724 domain-containing protein 9 (426 aa).

2 stretches are compositionally biased toward polar residues: residues 164–184 (ESSLTQGSGDETSDSVRNANE) and 213–222 (PRNQNASVND). Positions 164–248 (ESSLTQGSGD…REESLCSDAS (85 aa)) are disordered. A compositionally biased stretch (basic and acidic residues) spans 223 to 242 (STRENENSEDINRKRKREES). The 170-residue stretch at 256 to 425 (LPFEKKLSIW…LQFQTTASAP (170 aa)) folds into the DUF724 domain. The stretch at 370–402 (AEKESIKIENERKILELQRLNEEVDKEIAQSKS) forms a coiled coil.

As to expression, expressed in flowers.

It is found in the nucleus. Functionally, may be involved in the polar growth of plant cells via transportation of RNAs. The sequence is that of DUF724 domain-containing protein 9 from Arabidopsis thaliana (Mouse-ear cress).